A 428-amino-acid chain; its full sequence is Glutamate-1-semialdehyde 2,1-aminomutase (428 aa).

Residue Lys267 is modified to N6-(pyridoxal phosphate)lysine.

Belongs to the class-III pyridoxal-phosphate-dependent aminotransferase family. HemL subfamily. In terms of assembly, homodimer. Requires pyridoxal 5'-phosphate as cofactor.

It localises to the cytoplasm. It carries out the reaction (S)-4-amino-5-oxopentanoate = 5-aminolevulinate. Its pathway is porphyrin-containing compound metabolism; protoporphyrin-IX biosynthesis; 5-aminolevulinate from L-glutamyl-tRNA(Glu): step 2/2. The chain is Glutamate-1-semialdehyde 2,1-aminomutase from Persephonella marina (strain DSM 14350 / EX-H1).